We begin with the raw amino-acid sequence, 93 residues long: Small integral membrane protein 41 (93 aa).

A helical transmembrane segment spans residues 38–58; sequence VVLGVLSLLVLCGVLFLGGGL. Residues 71 to 80 show a composition bias toward basic and acidic residues; the sequence is REQRASREPE. The interval 71–93 is disordered; it reads REQRASREPEPGSASGEDGDDDS.

It localises to the membrane. This chain is Small integral membrane protein 41, found in Homo sapiens (Human).